The following is a 295-amino-acid chain: 4-hydroxy-tetrahydrodipicolinate synthase (295 aa).

Thr47 contacts pyruvate. The active-site Proton donor/acceptor is Tyr135. The active-site Schiff-base intermediate with substrate is Lys163. Position 206 (Ile206) interacts with pyruvate.

This sequence belongs to the DapA family. Homodimer.

Its subcellular location is the cytoplasm. The catalysed reaction is L-aspartate 4-semialdehyde + pyruvate = (2S,4S)-4-hydroxy-2,3,4,5-tetrahydrodipicolinate + H2O + H(+). The protein operates within amino-acid biosynthesis; L-lysine biosynthesis via DAP pathway; (S)-tetrahydrodipicolinate from L-aspartate: step 3/4. Catalyzes the condensation of (S)-aspartate-beta-semialdehyde [(S)-ASA] and pyruvate to 4-hydroxy-tetrahydrodipicolinate (HTPA). This chain is 4-hydroxy-tetrahydrodipicolinate synthase, found in Staphylococcus aureus (strain bovine RF122 / ET3-1).